Reading from the N-terminus, the 1311-residue chain is AF4/FMR2 family member 2 (1311 aa).

Disordered stretches follow at residues 94-187, 204-229, and 377-417; these read LVGI…LTQD, PQIG…GEDA, and TAGH…TKSV. Polar residues predominate over residues 101–111; sequence SVPQNPNNKNE. Residues 155-164 are compositionally biased toward basic and acidic residues; sequence SKPEWSRDSH. A compositionally biased stretch (polar residues) spans 165–187; sequence NPSTVLASQASGQPNKMQTLTQD. Composition is skewed to polar residues over residues 377-396 and 403-417; these read TAGH…SQHL and QKWN…TKSV. At serine 430 the chain carries Phosphoserine. Disordered regions lie at residues 457–530, 574–726, 818–867, and 881–943; these read KAKP…KWQL, TNAS…DQEE, SLHA…IPEK, and PPCI…DKNI. Residues 465-477 are compositionally biased toward pro residues; it reads VNPPLATPQPPPA. Residues 478–491 show a composition bias toward low complexity; the sequence is VQASGGSGSSSESE. Threonine 517 carries the phosphothreonine modification. The segment covering 582–597 has biased composition (basic and acidic residues); that stretch reads EPKERPLLSLIREKAR. Residues 615-625 show a composition bias toward polar residues; that stretch reads STTSETVSQRT. A compositionally biased stretch (basic and acidic residues) spans 655–668; sequence PKEKESVELHDPPR. Positions 669-679 are enriched in basic residues; it reads GRNKATAHKPA. The segment covering 857–867 has biased composition (basic and acidic residues); that stretch reads PIEVAEKIPEK. 2 stretches are compositionally biased toward pro residues: residues 883 to 892 and 913 to 922; these read CISPAPPHKP and FPPPLSPLPE.

The protein belongs to the AF4 family. In terms of tissue distribution, brain (most abundant in hippocampus and amygdala), placenta and lung.

The protein localises to the nucleus speckle. Functionally, RNA-binding protein. Might be involved in alternative splicing regulation through an interaction with G-quartet RNA structure. The polypeptide is AF4/FMR2 family member 2 (Homo sapiens (Human)).